A 191-amino-acid polypeptide reads, in one-letter code: ATP-dependent Clp protease proteolytic subunit 1 (191 aa).

Ser-91 functions as the Nucleophile in the catalytic mechanism. His-116 is an active-site residue.

It belongs to the peptidase S14 family. As to quaternary structure, fourteen ClpP subunits assemble into 2 heptameric rings which stack back to back to give a disk-like structure with a central cavity, resembling the structure of eukaryotic proteasomes.

The protein localises to the cytoplasm. The enzyme catalyses Hydrolysis of proteins to small peptides in the presence of ATP and magnesium. alpha-casein is the usual test substrate. In the absence of ATP, only oligopeptides shorter than five residues are hydrolyzed (such as succinyl-Leu-Tyr-|-NHMec, and Leu-Tyr-Leu-|-Tyr-Trp, in which cleavage of the -Tyr-|-Leu- and -Tyr-|-Trp bonds also occurs).. Cleaves peptides in various proteins in a process that requires ATP hydrolysis. Has a chymotrypsin-like activity. Plays a major role in the degradation of misfolded proteins. In Chlamydia caviae (strain ATCC VR-813 / DSM 19441 / 03DC25 / GPIC) (Chlamydophila caviae), this protein is ATP-dependent Clp protease proteolytic subunit 1.